The sequence spans 178 residues: Large ribosomal subunit protein bL25 (178 aa).

Belongs to the bacterial ribosomal protein bL25 family. CTC subfamily. In terms of assembly, part of the 50S ribosomal subunit; part of the 5S rRNA/L5/L18/L25 subcomplex. Contacts the 5S rRNA. Binds to the 5S rRNA independently of L5 and L18.

In terms of biological role, this is one of the proteins that binds to the 5S RNA in the ribosome where it forms part of the central protuberance. The chain is Large ribosomal subunit protein bL25 from Helicobacter pylori (strain G27).